We begin with the raw amino-acid sequence, 516 residues long: TBC1 domain family member 22A (516 aa).

A2 carries the post-translational modification N-acetylalanine. 2 disordered regions span residues 63–88 (EFES…ATES) and 102–186 (LRNH…ALAD). Over residues 107 to 116 (QRQSQPSQKT) the composition is skewed to polar residues. The span at 122-133 (EPQPIAEPPVPP) shows a compositional bias: pro residues. Positions 143–179 (VSESHTPCPSESTGDTVPLQRSQSLPHSATVTLSGTS) are enriched in polar residues. Residues S144 and S166 each carry the phosphoserine modification. The Rab-GAP TBC domain maps to 221–445 (GIPKPVRPMT…RLWDTYQSEP (225 aa)).

In terms of assembly, homodimer. Interacts with ACBD3 and ARFGEF1. Interacts with YWHAB, YWHAE, YWHAG, YWHAH, YWHAQ and YWHAZ.

Functionally, may act as a GTPase-activating protein for Rab family protein(s). In Mus musculus (Mouse), this protein is TBC1 domain family member 22A (Tbc1d22a).